The sequence spans 204 residues: uncharacterized protein (204 aa).

The first 16 residues, 1 to 16 (MKYTFLAVLSAVTVLA), serve as a signal peptide directing secretion.

It is found in the secreted. This is an uncharacterized protein from Arthroderma benhamiae (strain ATCC MYA-4681 / CBS 112371) (Trichophyton mentagrophytes).